An 80-amino-acid chain; its full sequence is Exodeoxyribonuclease 7 small subunit (80 aa).

It belongs to the XseB family. In terms of assembly, heterooligomer composed of large and small subunits.

Its subcellular location is the cytoplasm. It catalyses the reaction Exonucleolytic cleavage in either 5'- to 3'- or 3'- to 5'-direction to yield nucleoside 5'-phosphates.. In terms of biological role, bidirectionally degrades single-stranded DNA into large acid-insoluble oligonucleotides, which are then degraded further into small acid-soluble oligonucleotides. This Pseudomonas putida (strain W619) protein is Exodeoxyribonuclease 7 small subunit.